The following is a 329-amino-acid chain: Delta-aminolevulinic acid dehydratase (329 aa).

Lys-202 functions as the Schiff-base intermediate with substrate in the catalytic mechanism. Residues Arg-212 and Arg-223 each coordinate 5-aminolevulinate. A Mg(2+)-binding site is contributed by Glu-239. The active-site Schiff-base intermediate with substrate is Lys-254. 2 residues coordinate 5-aminolevulinate: Ser-280 and Tyr-319.

It belongs to the ALAD family. Homooctamer.

It catalyses the reaction 2 5-aminolevulinate = porphobilinogen + 2 H2O + H(+). The protein operates within porphyrin-containing compound metabolism; protoporphyrin-IX biosynthesis; coproporphyrinogen-III from 5-aminolevulinate: step 1/4. Its function is as follows. Catalyzes an early step in the biosynthesis of tetrapyrroles. Binds two molecules of 5-aminolevulinate per subunit, each at a distinct site, and catalyzes their condensation to form porphobilinogen. The protein is Delta-aminolevulinic acid dehydratase (hemB) of Mycobacterium tuberculosis (strain CDC 1551 / Oshkosh).